The chain runs to 324 residues: Acetyl-coenzyme A carboxylase carboxyl transferase subunit alpha (324 aa).

The CoA carboxyltransferase C-terminal domain occupies Ile-37–Gln-291.

It belongs to the AccA family. Acetyl-CoA carboxylase is a heterohexamer composed of biotin carboxyl carrier protein (AccB), biotin carboxylase (AccC) and two subunits each of ACCase subunit alpha (AccA) and ACCase subunit beta (AccD).

It localises to the cytoplasm. It catalyses the reaction N(6)-carboxybiotinyl-L-lysyl-[protein] + acetyl-CoA = N(6)-biotinyl-L-lysyl-[protein] + malonyl-CoA. It participates in lipid metabolism; malonyl-CoA biosynthesis; malonyl-CoA from acetyl-CoA: step 1/1. Component of the acetyl coenzyme A carboxylase (ACC) complex. First, biotin carboxylase catalyzes the carboxylation of biotin on its carrier protein (BCCP) and then the CO(2) group is transferred by the carboxyltransferase to acetyl-CoA to form malonyl-CoA. The sequence is that of Acetyl-coenzyme A carboxylase carboxyl transferase subunit alpha from Bacillus cereus (strain B4264).